The following is a 2184-amino-acid chain: Chromodomain-helicase-DNA-binding protein 8 (2184 aa).

2 disordered regions span residues 379-399 (VKTSTGGGESRKLDSQKKQEK) and 419-527 (IPRV…KRKK). Positions 387–399 (ESRKLDSQKKQEK) are enriched in basic and acidic residues. A compositionally biased stretch (acidic residues) spans 425 to 437 (EDELPSVNPEDDD). The span at 448–459 (GETSDRSKDEKP) shows a compositional bias: basic and acidic residues. A compositionally biased stretch (basic residues) spans 516–527 (KRRSNRQVKRKK). Chromo domains lie at 586-653 (AIVD…TQMQ) and 668-734 (VEVD…RVAR). One can recognise a Helicase ATP-binding domain in the interval 767-941 (LFNWYNRQNC…FSLLHFLEPT (175 aa)). ATP is bound at residue 780 to 787 (DEMGLGKT). The DEAH box signature appears at 892–895 (DEAH). Residues 1081–1252 (LIDKLLPKLR…FTKKEIEDLL (172 aa)) enclose the Helicase C-terminal domain. Disordered regions lie at residues 1907–1989 (GISG…EESR) and 2039–2076 (WSSPRRLSDPPSDSPDSLPPTPEQQSPAHFTQIRPAPD). Low complexity-rich tracts occupy residues 1912 to 1961 (SRPS…SNSE) and 2040 to 2054 (SSPRRLSDPPSDSPD).

It belongs to the SNF2/RAD54 helicase family. CHD8 subfamily. As to quaternary structure, component of some MLL1/MLL complex.

It localises to the nucleus. The enzyme catalyses ATP + H2O = ADP + phosphate + H(+). In terms of biological role, ATP-dependent chromatin-remodeling factor, it slides nucleosomes along DNA; nucleosome sliding requires ATP. Acts as a transcription repressor by remodeling chromatin structure and recruiting histone H1 to target genes. Suppresses p53/tp53-mediated apoptosis by recruiting histone H1 and preventing p53/tp53 transactivation activity. Acts as a negative regulator of Wnt signaling pathway by regulating beta-catenin (ctnnb1) activity. Negatively regulates ctnnb1-targeted gene expression by being recruited specifically to the promoter regions of several ctnnb1 responsive genes. May also act as a transcription activator by participating in efficient U6 RNA polymerase III transcription. The chain is Chromodomain-helicase-DNA-binding protein 8 from Xenopus tropicalis (Western clawed frog).